Consider the following 449-residue polypeptide: Ribulose bisphosphate carboxylase large chain (449 aa).

Lys-5 bears the N6,N6,N6-trimethyllysine mark. Residues Asn-114 and Thr-164 each contribute to the substrate site. The active-site Proton acceptor is the Lys-166. Lys-168 lines the substrate pocket. Mg(2+)-binding residues include Lys-192, Asp-194, and Glu-195. Lys-192 is modified (N6-carboxylysine). The Proton acceptor role is filled by His-285. The substrate site is built by Arg-286, His-318, and Ser-370.

Belongs to the RuBisCO large chain family. Type I subfamily. As to quaternary structure, heterohexadecamer of 8 large chains and 8 small chains; disulfide-linked. The disulfide link is formed within the large subunit homodimers. It depends on Mg(2+) as a cofactor. The disulfide bond which can form in the large chain dimeric partners within the hexadecamer appears to be associated with oxidative stress and protein turnover.

The protein localises to the plastid. It is found in the chloroplast. The catalysed reaction is 2 (2R)-3-phosphoglycerate + 2 H(+) = D-ribulose 1,5-bisphosphate + CO2 + H2O. The enzyme catalyses D-ribulose 1,5-bisphosphate + O2 = 2-phosphoglycolate + (2R)-3-phosphoglycerate + 2 H(+). Functionally, ruBisCO catalyzes two reactions: the carboxylation of D-ribulose 1,5-bisphosphate, the primary event in carbon dioxide fixation, as well as the oxidative fragmentation of the pentose substrate in the photorespiration process. Both reactions occur simultaneously and in competition at the same active site. The chain is Ribulose bisphosphate carboxylase large chain from Zamioculcas zamiifolia (Aroid palm).